The primary structure comprises 389 residues: uncharacterized protein (389 aa).

Over residues 1–12 (MVHATSQSASTE) the composition is skewed to polar residues. Disordered regions lie at residues 1–49 (MVHA…DEDL) and 86–111 (HKSM…ANRA). A compositionally biased stretch (acidic residues) spans 40-49 (ESGDEYDEDL). Residues 93 to 110 (RGKKKRGKTAKKAKKANR) show a composition bias toward basic residues.

This is an uncharacterized protein from Caenorhabditis elegans.